We begin with the raw amino-acid sequence, 273 residues long: 4-hydroxy-tetrahydrodipicolinate reductase (273 aa).

12-17 (GAAGRM) provides a ligand contact to NAD(+). Arginine 39 is an NADP(+) binding site. Residues 102–104 (GTT) and 126–129 (AANF) contribute to the NAD(+) site. Histidine 159 (proton donor/acceptor) is an active-site residue. Histidine 160 provides a ligand contact to (S)-2,3,4,5-tetrahydrodipicolinate. Residue lysine 163 is the Proton donor of the active site. Position 169-170 (169-170 (GT)) interacts with (S)-2,3,4,5-tetrahydrodipicolinate.

It belongs to the DapB family. In terms of assembly, homotetramer.

Its subcellular location is the cytoplasm. The enzyme catalyses (S)-2,3,4,5-tetrahydrodipicolinate + NAD(+) + H2O = (2S,4S)-4-hydroxy-2,3,4,5-tetrahydrodipicolinate + NADH + H(+). It carries out the reaction (S)-2,3,4,5-tetrahydrodipicolinate + NADP(+) + H2O = (2S,4S)-4-hydroxy-2,3,4,5-tetrahydrodipicolinate + NADPH + H(+). The protein operates within amino-acid biosynthesis; L-lysine biosynthesis via DAP pathway; (S)-tetrahydrodipicolinate from L-aspartate: step 4/4. Functionally, catalyzes the conversion of 4-hydroxy-tetrahydrodipicolinate (HTPA) to tetrahydrodipicolinate. This chain is 4-hydroxy-tetrahydrodipicolinate reductase, found in Erwinia tasmaniensis (strain DSM 17950 / CFBP 7177 / CIP 109463 / NCPPB 4357 / Et1/99).